The following is a 311-amino-acid chain: Tricarboxylate transport protein, mitochondrial (311 aa).

The propeptide at 1-13 (MAAPRGPRALSAA) is removed in mature form. The disordered stretch occupies residues 1–21 (MAAPRGPRALSAAAPGSGKPK). Solcar repeat units lie at residues 23–111 (THPG…LSNH), 122–208 (RRGL…LRNW), and 218–303 (MNPL…VVKL). 3 helical membrane-spanning segments follow: residues 29–46 (ILAGGLAGGIEICITFPT), 86–105 (GLSSLLYGSIPKAAVRFGMF), and 129–143 (LGAGVAEAVVVVCPM). Phosphoserine is present on Ser156. Transmembrane regions (helical) follow at residues 183 to 202 (GLTATVLKQGSNQAIRFFVM), 224 to 241 (GVFGATAGAASVFGNTPL), and 278 to 297 (GTVPRLGRVCLDVAIVFIIY).

The protein belongs to the mitochondrial carrier (TC 2.A.29) family. Possesses a short cleavable presequence, which, however, is found to be dispensable both for targeting to mitochondria and insertion into the inner membrane. However, the presequence is required to keep SLC25A1 in a soluble state and thus in an import-competent state. Mature SLC25A1 lacking the presequence is prone to aggregation. As to expression, expressed minimally but ubiquitously throughout the adult brain. Detected at higher levels in the olfactory bulb, neocortex and cerebellum. Also expressed in a subset of large cells in the globus pallidus.

It localises to the mitochondrion inner membrane. Its subcellular location is the mitochondrion membrane. It catalyses the reaction (S)-malate(in) + citrate(out) = (S)-malate(out) + citrate(in). The enzyme catalyses D-threo-isocitrate(in) + citrate(out) = D-threo-isocitrate(out) + citrate(in). The catalysed reaction is citrate(out) + succinate(in) = citrate(in) + succinate(out). It carries out the reaction cis-aconitate(in) + citrate(out) = cis-aconitate(out) + citrate(in). It catalyses the reaction trans-aconitate(in) + citrate(out) = trans-aconitate(out) + citrate(in). The enzyme catalyses phosphoenolpyruvate(in) + citrate(out) = phosphoenolpyruvate(out) + citrate(in). The catalysed reaction is maleate(in) + citrate(out) = maleate(out) + citrate(in). In terms of biological role, mitochondrial electroneutral antiporter that exports citrate from the mitochondria into the cytosol in exchange for malate. Also able to mediate the exchange of citrate for isocitrate, phosphoenolpyruvate, cis-aconitate and to a lesser extent trans-aconitate, maleate and succinate. In the cytoplasm, citrate plays important roles in fatty acid and sterol synthesis, regulation of glycolysis, protein acetylation, and other physiopathological processes. The protein is Tricarboxylate transport protein, mitochondrial of Mus musculus (Mouse).